Consider the following 413-residue polypeptide: 4-hydroxy-3-methylbut-2-en-1-yl diphosphate synthase (flavodoxin) (413 aa).

4 residues coordinate [4Fe-4S] cluster: Cys-298, Cys-301, Cys-344, and Glu-351.

It belongs to the IspG family. It depends on [4Fe-4S] cluster as a cofactor.

It catalyses the reaction (2E)-4-hydroxy-3-methylbut-2-enyl diphosphate + oxidized [flavodoxin] + H2O + 2 H(+) = 2-C-methyl-D-erythritol 2,4-cyclic diphosphate + reduced [flavodoxin]. It functions in the pathway isoprenoid biosynthesis; isopentenyl diphosphate biosynthesis via DXP pathway; isopentenyl diphosphate from 1-deoxy-D-xylulose 5-phosphate: step 5/6. Functionally, converts 2C-methyl-D-erythritol 2,4-cyclodiphosphate (ME-2,4cPP) into 1-hydroxy-2-methyl-2-(E)-butenyl 4-diphosphate. The protein is 4-hydroxy-3-methylbut-2-en-1-yl diphosphate synthase (flavodoxin) of Koribacter versatilis (strain Ellin345).